The primary structure comprises 79 residues: MVDAITVLTAIGITVLMLLMVISGAAMIVKELNPNDIFTMQSLKFNRAVTIFKYIGLFIYIPGTIILYATYVKSLLMKS.

The Intravirion portion of the chain corresponds to 1 to 8 (MVDAITVL). The chain crosses the membrane as a helical span at residues 9–29 (TAIGITVLMLLMVISGAAMIV). The Virion surface portion of the chain corresponds to 30-47 (KELNPNDIFTMQSLKFNR). Residues 48–68 (AVTIFKYIGLFIYIPGTIILY) form a helical membrane-spanning segment. The Intravirion segment spans residues 69-79 (ATYVKSLLMKS).

The protein belongs to the orthopoxvirus OPG081 family.

It localises to the virion membrane. Its function is as follows. Envelope protein. The polypeptide is Protein OPG081 (OPG081) (Vaccinia virus (strain Copenhagen) (VACV)).